Reading from the N-terminus, the 89-residue chain is Small ribosomal subunit protein uS15 (89 aa).

This sequence belongs to the universal ribosomal protein uS15 family. As to quaternary structure, part of the 30S ribosomal subunit. Forms a bridge to the 50S subunit in the 70S ribosome, contacting the 23S rRNA.

Functionally, one of the primary rRNA binding proteins, it binds directly to 16S rRNA where it helps nucleate assembly of the platform of the 30S subunit by binding and bridging several RNA helices of the 16S rRNA. Its function is as follows. Forms an intersubunit bridge (bridge B4) with the 23S rRNA of the 50S subunit in the ribosome. The sequence is that of Small ribosomal subunit protein uS15 from Protochlamydia amoebophila (strain UWE25).